Here is a 246-residue protein sequence, read N- to C-terminus: Ribonuclease PH (246 aa).

Phosphate is bound by residues Arg-91 and 129-131 (GTR).

Belongs to the RNase PH family. Homohexameric ring arranged as a trimer of dimers.

It catalyses the reaction tRNA(n+1) + phosphate = tRNA(n) + a ribonucleoside 5'-diphosphate. Phosphorolytic 3'-5' exoribonuclease that plays an important role in tRNA 3'-end maturation. Removes nucleotide residues following the 3'-CCA terminus of tRNAs; can also add nucleotides to the ends of RNA molecules by using nucleoside diphosphates as substrates, but this may not be physiologically important. Probably plays a role in initiation of 16S rRNA degradation (leading to ribosome degradation) during starvation. This Burkholderia ambifaria (strain MC40-6) protein is Ribonuclease PH.